Consider the following 730-residue polypeptide: Elongation factor 2 (730 aa).

One can recognise a tr-type G domain in the interval 19-260 (VMIRNIAIIA…MVIRFLPSPI (242 aa)). GTP contacts are provided by residues 28-35 (AHIDHGKT), 94-98 (DTPGH), and 148-151 (NKVD). At histidine 596 the chain carries Diphthamide.

Belongs to the TRAFAC class translation factor GTPase superfamily. Classic translation factor GTPase family. EF-G/EF-2 subfamily.

Its subcellular location is the cytoplasm. Its function is as follows. Catalyzes the GTP-dependent ribosomal translocation step during translation elongation. During this step, the ribosome changes from the pre-translocational (PRE) to the post-translocational (POST) state as the newly formed A-site-bound peptidyl-tRNA and P-site-bound deacylated tRNA move to the P and E sites, respectively. Catalyzes the coordinated movement of the two tRNA molecules, the mRNA and conformational changes in the ribosome. This Methanococcoides methylutens protein is Elongation factor 2 (fusA).